Here is a 330-residue protein sequence, read N- to C-terminus: Cytoskeleton protein RodZ (330 aa).

At 1–111 (MNTEATQDHQ…LGKRRKKRDG (111 aa)) the chain is on the cytoplasmic side. In terms of domain architecture, HTH cro/C1-type spans 19-71 (LRHAREQLGLSQQAVAERLCLKVSTVRDIEDDKAPADLASTFLRGYIRSYARL). A DNA-binding region (H-T-H motif) is located at residues 30–49 (QQAVAERLCLKVSTVRDIED). Residues 112 to 132 (WLMSFTWLVLFVVIGLSGAWW) form a helical; Signal-anchor for type II membrane protein membrane-spanning segment. Residues 133–330 (WQDHKAQQEE…TLNAEQSPAQ (198 aa)) are Periplasmic-facing. The span at 146–166 (MADQSSAELNGGDANSQNVPL) shows a compositional bias: polar residues. The disordered stretch occupies residues 146-237 (MADQSSAELN…ASPLPTDQAN (92 aa)). 2 stretches are compositionally biased toward low complexity: residues 176-202 (TDSA…TPAD) and 216-233 (TAGT…PLPT).

The protein belongs to the RodZ family.

It localises to the cell inner membrane. Its function is as follows. Cytoskeletal protein that is involved in cell-shape control through regulation of the length of the long axis. This chain is Cytoskeleton protein RodZ, found in Klebsiella pneumoniae (strain 342).